A 467-amino-acid chain; its full sequence is Glutamine synthetase (467 aa).

A GS beta-grasp domain is found at 11 to 95 (HDVKWIDLRF…IVCDIIEPST (85 aa)). A GS catalytic domain is found at 103–467 (PRAIARRAEE…PLEYDLYYSV (365 aa)). Mg(2+) is bound by residues Glu-128 and Glu-130. Glu-206 contacts ATP. 2 residues coordinate Mg(2+): Glu-211 and Glu-219. L-glutamate is bound by residues 263-264 (NG) and Gly-264. His-268 provides a ligand contact to Mg(2+). Residues 270 to 272 (HMS) and Ser-272 contribute to the ATP site. The L-glutamate site is built by Arg-320, Glu-326, and Arg-338. Residues Arg-338, Arg-343, and Lys-351 each contribute to the ATP site. Residue Glu-356 coordinates Mg(2+). Arg-358 is a binding site for L-glutamate. The residue at position 396 (Tyr-396) is an O-AMP-tyrosine.

It belongs to the glutamine synthetase family. As to quaternary structure, oligomer of 12 subunits arranged in the form of two hexameric ring. Requires Mg(2+) as cofactor.

It localises to the cytoplasm. It catalyses the reaction L-glutamate + NH4(+) + ATP = L-glutamine + ADP + phosphate + H(+). The activity of this enzyme could be controlled by adenylation under conditions of abundant glutamine. Catalyzes the ATP-dependent biosynthesis of glutamine from glutamate and ammonia. The polypeptide is Glutamine synthetase (Azotobacter vinelandii).